The following is a 477-amino-acid chain: Ankyrin repeat, SAM and basic leucine zipper domain-containing protein 1 (477 aa).

Phosphoserine is present on residues S17, S18, and S20. ANK repeat units follow at residues 46–76 (EKKE…SVDA), 80–109 (YGWT…NASF), 112–146 (DKQT…DPNV), 150–179 (RLMT…EVNT), 183–212 (NGYT…NKML), and 216–245 (DGKL…PLEG). The region spanning 274–336 (SYAAFGDLEV…KILTALKELE (63 aa)) is the SAM domain.

Interacts with DDX4, PIWIL1, RANBP9 and TDRD1.

It localises to the cytoplasm. Plays a central role during spermatogenesis by repressing transposable elements and preventing their mobilization, which is essential for the germline integrity. Acts via the piRNA metabolic process, which mediates the repression of transposable elements during meiosis by forming complexes composed of piRNAs and Piwi proteins and governs the methylation and subsequent repression of transposons. Its association with pi-bodies suggests a participation in the primary piRNAs metabolic process. Required prior to the pachytene stage to facilitate the production of multiple types of piRNAs, including those associated with repeats involved in the regulation of retrotransposons. May act by mediating protein-protein interactions during germ cell maturation. In Ateles geoffroyi (Black-handed spider monkey), this protein is Ankyrin repeat, SAM and basic leucine zipper domain-containing protein 1 (ASZ1).